The following is a 1840-amino-acid chain: Collagen alpha-1(V) chain (1840 aa).

A signal peptide spans 1–30 (MDVHTRWKAPRPGAPLLSSPLLLLLLLLWA). Residues 72 to 244 (DVAYRVSKDA…DYCEHYSPDC (173 aa)) form the Laminin G-like domain. The segment at 231-445 (RAAYDYCEHY…MPANQDTIYE (215 aa)) is nonhelical region. Sulfotyrosine is present on residues Tyr-234, Tyr-236, Tyr-240, Tyr-262, Tyr-263, Tyr-336, Tyr-338, and Tyr-344. Disordered regions lie at residues 241–547 (SPDC…QESQ) and 561–1576 (GPAG…EVIQ). Acidic residues predominate over residues 258–268 (NPDEYYPEGEG). Composition is skewed to low complexity over residues 335 to 352 (DYDY…PYED), 375 to 387 (PTST…SSNP), and 462 to 471 (IIEPGMLIEG). The interval 446 to 560 (GIGGPRGEKG…ILQQARLALR (115 aa)) is interrupted collagenous region. Pro residues predominate over residues 472 to 487 (PPGPEGPAGLPGPPGT). 2 stretches are compositionally biased toward low complexity: residues 508 to 525 (LPGA…LMLP) and 561 to 572 (GPAGPMGLTGRP). The tract at residues 561–1572 (GPAGPMGLTG…GLPGPPGPPG (1012 aa)) is triple-helical region. 4-hydroxyproline is present on residues Pro-572, Pro-578, and Pro-623. Lys-629 is subject to 5-hydroxylysine. Pro-641 carries the post-translational modification 4-hydroxyproline. A 5-hydroxylysine modification is found at Lys-644. A 4-hydroxyproline mark is found at Pro-650, Pro-656, Pro-659, Pro-677, and Pro-680. A compositionally biased stretch (low complexity) spans 673–688 (PRGLPGEPGPRGLLGP). 2 positions are modified to 3-hydroxyproline: Pro-682 and Pro-688. Over residues 689–698 (KGPPGPPGPP) the composition is skewed to pro residues. Residues Pro-692, Pro-698, and Pro-707 each carry the 4-hydroxyproline modification. Lys-710 bears the 5-hydroxylysine mark. Pro-719, Pro-722, Pro-728, and Pro-734 each carry 4-hydroxyproline. Residues 724-743 (QQGNPGAQGLPGPQGAIGPP) show a composition bias toward low complexity. Lys-746 is modified (5-hydroxylysine). The segment covering 749-758 (LGKPGLPGMP) has biased composition (low complexity). 4-hydroxyproline occurs at positions 752, 758, 764, 767, and 773. Residue Lys-776 is modified to 5-hydroxylysine. Residues Pro-782 and Pro-791 each carry the 4-hydroxyproline modification. Residues Lys-797, Lys-806, Lys-809, and Lys-812 each carry the 5-hydroxylysine modification. Pro-818 carries the 4-hydroxyproline modification. The residue at position 821 (Lys-821) is a 5-hydroxylysine. Pro-836 carries the post-translational modification 4-hydroxyproline. Residues 839–848 (RGEDGPEGPK) are compositionally biased toward basic and acidic residues. 5-hydroxylysine occurs at positions 848 and 866. 3 positions are modified to 4-hydroxyproline: Pro-872, Pro-875, and Pro-878. Residue Lys-884 is modified to 5-hydroxylysine. 2 positions are modified to 4-hydroxyproline: Pro-890 and Pro-893. The residue at position 899 (Lys-899) is a 5-hydroxylysine. Residues Pro-905 and Pro-908 each carry the 4-hydroxyproline modification. Over residues 910 to 919 (PRGQRGPTGP) the composition is skewed to low complexity. Pro-932 and Pro-947 each carry 4-hydroxyproline. Low complexity-rich tracts occupy residues 973–992 (KDGL…QGKT) and 1001–1013 (VGPQ…TGPM). A 4-hydroxyproline mark is found at Pro-1019, Pro-1022, Pro-1025, and Pro-1031. Low complexity predominate over residues 1090–1106 (SPGERGPAGAAGPIGIP). Positions 1108 to 1117 (RPGPQGPPGP) are enriched in pro residues. Pro-1223 and Pro-1226 each carry 4-hydroxyproline. Positions 1261–1270 (PSGAPGADGP) are enriched in low complexity. Over residues 1296-1305 (GLPGEGGPLG) the composition is skewed to gly residues. Composition is skewed to pro residues over residues 1382 to 1400 (TGEP…PGPA) and 1456 to 1471 (SPGP…PPGL). 4-hydroxyproline is present on residues Pro-1469 and Pro-1472. The span at 1487–1496 (PGLIGLIGPP) shows a compositional bias: low complexity. Positions 1528-1543 (PLGPPGPPGLPGPPGP) are enriched in pro residues. Over residues 1544 to 1556 (KGAKGSSGPTGPK) the composition is skewed to low complexity. The tract at residues 1573 to 1607 (EVIQPLPIQASRTRRNIDASQLLDDGAGESYVDYA) is nonhelical region. A sulfotyrosine mark is found at Tyr-1603 and Tyr-1606. The Fibrillar collagen NC1 domain occupies 1611–1839 (EEIFGSLNSL…GFEVGPACFL (229 aa)).

The protein belongs to the fibrillar collagen family. As to quaternary structure, trimers of two alpha 1(V) and one alpha 2(V) chains in most tissues and trimers of one alpha 1(V), one alpha 2(V), and one alpha 3(V) chains in placenta. Interacts with CSPG4. Post-translationally, prolines at the third position of the tripeptide repeating unit (G-X-Y) are hydroxylated in some or all of the chains. In terms of processing, sulfated on 40% of tyrosines. Hydroxylation on proline residues within the sequence motif, GXPG, is most likely to be 4-hydroxy as this fits the requirement for 4-hydroxylation in vertebrates. A high molecular weight form was detected in Schwann cells and peripheral nerve. A lower, probably processed form, is detected in all other tissues tested (at protein level).

The protein localises to the secreted. Its subcellular location is the extracellular space. It localises to the extracellular matrix. Functionally, type V collagen is a member of group I collagen (fibrillar forming collagen). It is a minor connective tissue component of nearly ubiquitous distribution. Type V collagen binds to DNA, heparan sulfate, thrombospondin, heparin, and insulin. This Rattus norvegicus (Rat) protein is Collagen alpha-1(V) chain (Col5a1).